A 229-amino-acid polypeptide reads, in one-letter code: Translation initiation factor 6 (229 aa).

This sequence belongs to the eIF-6 family.

Functionally, binds to the 50S ribosomal subunit and prevents its association with the 30S ribosomal subunit to form the 70S initiation complex. The sequence is that of Translation initiation factor 6 from Thermococcus kodakarensis (strain ATCC BAA-918 / JCM 12380 / KOD1) (Pyrococcus kodakaraensis (strain KOD1)).